Here is a 201-residue protein sequence, read N- to C-terminus: ADP-ribosylation factor-related protein 1 (201 aa).

Residue M1 is modified to N-acetylmethionine. GTP is bound by residues G24–T31, D75–Q79, and N134–D137.

This sequence belongs to the small GTPase superfamily. Arf family. In terms of assembly, interacts with SYS1.

Its subcellular location is the golgi apparatus. It is found in the trans-Golgi network. Functionally, trans-Golgi-associated GTPase that regulates protein sorting. Controls the targeting of ARL1 and its effector to the trans-Golgi. Required for the lipidation of chylomicrons in the intestine and required for VLDL lipidation in the liver. This Bos taurus (Bovine) protein is ADP-ribosylation factor-related protein 1 (ARFRP1).